The primary structure comprises 415 residues: Histidine--tRNA ligase (415 aa).

This sequence belongs to the class-II aminoacyl-tRNA synthetase family. In terms of assembly, homodimer.

It is found in the cytoplasm. The catalysed reaction is tRNA(His) + L-histidine + ATP = L-histidyl-tRNA(His) + AMP + diphosphate + H(+). This chain is Histidine--tRNA ligase, found in Clostridium botulinum (strain Kyoto / Type A2).